A 355-amino-acid chain; its full sequence is Holliday junction branch migration complex subunit RuvB (355 aa).

Residues 4 to 190 (TDKLAAERII…FGIVARLEFY (187 aa)) are large ATPase domain (RuvB-L). ATP contacts are provided by residues Leu29, Arg30, Gly71, Lys74, Thr75, Thr76, 137–139 (EDY), Arg180, Tyr190, and Arg227. Mg(2+) is bound at residue Thr75. Positions 191–261 (DADQLARIVR…VADAALAMLD (71 aa)) are small ATPAse domain (RuvB-S). The segment at 264–355 (PVGFDLMDRK…RGMWDTPAGK (92 aa)) is head domain (RuvB-H). Positions 300, 319, and 324 each coordinate DNA.

This sequence belongs to the RuvB family. Homohexamer. Forms an RuvA(8)-RuvB(12)-Holliday junction (HJ) complex. HJ DNA is sandwiched between 2 RuvA tetramers; dsDNA enters through RuvA and exits via RuvB. An RuvB hexamer assembles on each DNA strand where it exits the tetramer. Each RuvB hexamer is contacted by two RuvA subunits (via domain III) on 2 adjacent RuvB subunits; this complex drives branch migration. In the full resolvosome a probable DNA-RuvA(4)-RuvB(12)-RuvC(2) complex forms which resolves the HJ.

It localises to the cytoplasm. It carries out the reaction ATP + H2O = ADP + phosphate + H(+). The RuvA-RuvB-RuvC complex processes Holliday junction (HJ) DNA during genetic recombination and DNA repair, while the RuvA-RuvB complex plays an important role in the rescue of blocked DNA replication forks via replication fork reversal (RFR). RuvA specifically binds to HJ cruciform DNA, conferring on it an open structure. The RuvB hexamer acts as an ATP-dependent pump, pulling dsDNA into and through the RuvAB complex. RuvB forms 2 homohexamers on either side of HJ DNA bound by 1 or 2 RuvA tetramers; 4 subunits per hexamer contact DNA at a time. Coordinated motions by a converter formed by DNA-disengaged RuvB subunits stimulates ATP hydrolysis and nucleotide exchange. Immobilization of the converter enables RuvB to convert the ATP-contained energy into a lever motion, pulling 2 nucleotides of DNA out of the RuvA tetramer per ATP hydrolyzed, thus driving DNA branch migration. The RuvB motors rotate together with the DNA substrate, which together with the progressing nucleotide cycle form the mechanistic basis for DNA recombination by continuous HJ branch migration. Branch migration allows RuvC to scan DNA until it finds its consensus sequence, where it cleaves and resolves cruciform DNA. The chain is Holliday junction branch migration complex subunit RuvB from Burkholderia ambifaria (strain ATCC BAA-244 / DSM 16087 / CCUG 44356 / LMG 19182 / AMMD) (Burkholderia cepacia (strain AMMD)).